We begin with the raw amino-acid sequence, 357 residues long: Protein-glutamate methylesterase/protein-glutamine glutaminase 1 (357 aa).

The 119-residue stretch at 7-125 (RAVIIDDSLL…QFDPEEIGNI (119 aa)) folds into the Response regulatory domain. Asp58 is modified (4-aspartylphosphate). Residues 162-344 (KKSPIQAICI…VEYIEPVTEI (183 aa)) enclose the CheB-type methylesterase domain. Active-site residues include Ser174, His201, and Asp297.

The protein belongs to the CheB family. Post-translationally, phosphorylated by CheA. Phosphorylation of the N-terminal regulatory domain activates the methylesterase activity.

The protein localises to the cytoplasm. The catalysed reaction is [protein]-L-glutamate 5-O-methyl ester + H2O = L-glutamyl-[protein] + methanol + H(+). The enzyme catalyses L-glutaminyl-[protein] + H2O = L-glutamyl-[protein] + NH4(+). Functionally, involved in chemotaxis. Part of a chemotaxis signal transduction system that modulates chemotaxis in response to various stimuli. Catalyzes the demethylation of specific methylglutamate residues introduced into the chemoreceptors (methyl-accepting chemotaxis proteins or MCP) by CheR. Also mediates the irreversible deamidation of specific glutamine residues to glutamic acid. In Leptospira interrogans serogroup Icterohaemorrhagiae serovar Lai (strain 56601), this protein is Protein-glutamate methylesterase/protein-glutamine glutaminase 1.